The sequence spans 117 residues: DNA-binding protein VNG_2008H (117 aa).

Positions 1–59 (MSGNPDDDRLEELRQRKKEQLKQQQQGGDAEREAQQQQAQQAEQQKQAMLKQNLTDGAR) are disordered. Residues 11–21 (EELRQRKKEQL) are compositionally biased toward basic and acidic residues. A compositionally biased stretch (low complexity) spans 35 to 48 (QQQQAQQAEQQKQA).

It belongs to the PDCD5 family.

This chain is DNA-binding protein VNG_2008H, found in Halobacterium salinarum (strain ATCC 700922 / JCM 11081 / NRC-1) (Halobacterium halobium).